A 250-amino-acid polypeptide reads, in one-letter code: Uridylate kinase (250 aa).

Residue 17–20 (KLSG) participates in ATP binding. Residue Gly-59 participates in UMP binding. Gly-60 and Arg-64 together coordinate ATP. Residues Asp-79 and 140–147 (TGNPYFTT) each bind UMP. 3 residues coordinate ATP: Thr-167, Tyr-173, and Asp-176.

This sequence belongs to the UMP kinase family. In terms of assembly, homohexamer.

The protein resides in the cytoplasm. It carries out the reaction UMP + ATP = UDP + ADP. It functions in the pathway pyrimidine metabolism; CTP biosynthesis via de novo pathway; UDP from UMP (UMPK route): step 1/1. Its activity is regulated as follows. Inhibited by UTP. Functionally, catalyzes the reversible phosphorylation of UMP to UDP. This is Uridylate kinase from Myxococcus xanthus (strain DK1622).